Here is a 197-residue protein sequence, read N- to C-terminus: Adenylyl-sulfate kinase (197 aa).

31-38 (GLSGAGKS) contacts ATP. The active-site Phosphoserine intermediate is the Ser-105.

The protein belongs to the APS kinase family.

The catalysed reaction is adenosine 5'-phosphosulfate + ATP = 3'-phosphoadenylyl sulfate + ADP + H(+). Its pathway is sulfur metabolism; hydrogen sulfide biosynthesis; sulfite from sulfate: step 2/3. In terms of biological role, catalyzes the synthesis of activated sulfate. In Aeromonas hydrophila subsp. hydrophila (strain ATCC 7966 / DSM 30187 / BCRC 13018 / CCUG 14551 / JCM 1027 / KCTC 2358 / NCIMB 9240 / NCTC 8049), this protein is Adenylyl-sulfate kinase.